A 518-amino-acid polypeptide reads, in one-letter code: Glutamate--cysteine ligase (518 aa).

It belongs to the glutamate--cysteine ligase type 1 family. Type 1 subfamily.

It carries out the reaction L-cysteine + L-glutamate + ATP = gamma-L-glutamyl-L-cysteine + ADP + phosphate + H(+). Its pathway is sulfur metabolism; glutathione biosynthesis; glutathione from L-cysteine and L-glutamate: step 1/2. The chain is Glutamate--cysteine ligase from Shigella dysenteriae serotype 1 (strain Sd197).